The chain runs to 371 residues: Cytochrome b (371 aa).

4 consecutive transmembrane segments (helical) span residues 25 to 45 (FGSMLLACSSMQVLTGFFLAV), 69 to 90 (WMMQNLHAIGASMFFICIYTHI), 105 to 125 (WLSGTTLLIMLMATAFFGYVL), and 170 to 190 (FFALHFILPFGIISLSSLHIM). Positions 75 and 89 each coordinate heme b. Heme b is bound by residues H174 and H188. H193 contacts a ubiquinone. 4 consecutive transmembrane segments (helical) span residues 218-238 (YKDMLMLSLMILALLMTVAFF), 280-300 (LGGALALVMSIMILLTAPFTH), 312-332 (IMQLMFWTLVATFAVITWAAT), and 339-358 (FTTISQVASTMYFMFFITNP).

This sequence belongs to the cytochrome b family. In terms of assembly, the cytochrome bc1 complex contains 3 respiratory subunits (MT-CYB, CYC1 and UQCRFS1), 2 core proteins (UQCRC1 and UQCRC2) and probably 6 low-molecular weight proteins. Heme b serves as cofactor.

The protein localises to the mitochondrion inner membrane. Its function is as follows. Component of the ubiquinol-cytochrome c reductase complex (complex III or cytochrome b-c1 complex) that is part of the mitochondrial respiratory chain. The b-c1 complex mediates electron transfer from ubiquinol to cytochrome c. Contributes to the generation of a proton gradient across the mitochondrial membrane that is then used for ATP synthesis. This chain is Cytochrome b (MT-CYB), found in Eryx colubrinus colubrinus.